Here is a 391-residue protein sequence, read N- to C-terminus: 3-ketoacyl-CoA thiolase (391 aa).

Residue Cys95 is the Acyl-thioester intermediate of the active site. Active-site proton acceptor residues include His347 and Cys377.

It belongs to the thiolase-like superfamily. Thiolase family. In terms of assembly, heterotetramer of two alpha chains (FadB) and two beta chains (FadA).

The protein resides in the cytoplasm. It carries out the reaction an acyl-CoA + acetyl-CoA = a 3-oxoacyl-CoA + CoA. The protein operates within lipid metabolism; fatty acid beta-oxidation. Functionally, catalyzes the final step of fatty acid oxidation in which acetyl-CoA is released and the CoA ester of a fatty acid two carbons shorter is formed. This Pseudomonas syringae pv. syringae (strain B728a) protein is 3-ketoacyl-CoA thiolase.